Reading from the N-terminus, the 180-residue chain is Adenine phosphoribosyltransferase (180 aa).

An N-acetylalanine modification is found at alanine 2. Phosphoserine occurs at positions 4, 15, and 30. The residue at position 60 (tyrosine 60) is a Phosphotyrosine. Serine 66 is subject to Phosphoserine. An N6-acetyllysine modification is found at lysine 114. A Phosphothreonine modification is found at threonine 135.

The protein belongs to the purine/pyrimidine phosphoribosyltransferase family. As to quaternary structure, homodimer.

It is found in the cytoplasm. The catalysed reaction is AMP + diphosphate = 5-phospho-alpha-D-ribose 1-diphosphate + adenine. It participates in purine metabolism; AMP biosynthesis via salvage pathway; AMP from adenine: step 1/1. Functionally, catalyzes a salvage reaction resulting in the formation of AMP, that is energically less costly than de novo synthesis. The polypeptide is Adenine phosphoribosyltransferase (Homo sapiens (Human)).